We begin with the raw amino-acid sequence, 214 residues long: Pyrrolidone-carboxylate peptidase 2 (214 aa).

Catalysis depends on residues E78, C141, and H165.

It belongs to the peptidase C15 family. Homotetramer.

It localises to the cytoplasm. It carries out the reaction Release of an N-terminal pyroglutamyl group from a polypeptide, the second amino acid generally not being Pro.. In terms of biological role, removes 5-oxoproline from various penultimate amino acid residues except L-proline. The chain is Pyrrolidone-carboxylate peptidase 2 from Streptococcus pneumoniae serotype 4 (strain ATCC BAA-334 / TIGR4).